The primary structure comprises 324 residues: HTH-type transcriptional regulator CysB (324 aa).

An HTH lysR-type domain is found at 1–59; the sequence is MKLQQLRYIVEVVNHNLNVSSTAEGLYTSQPGISKQVRMLEDELGIQIFARSGKHLTQV. The segment at residues 19 to 38 is a DNA-binding region (H-T-H motif); the sequence is VSSTAEGLYTSQPGISKQVR.

It belongs to the LysR transcriptional regulatory family. In terms of assembly, homotetramer.

The protein localises to the cytoplasm. In terms of biological role, this protein is a positive regulator of gene expression for the cysteine regulon. The inducer for CysB is N-acetylserine. Thiosulfate and sulfide act as anti-inducers. The polypeptide is HTH-type transcriptional regulator CysB (cysB) (Klebsiella pneumoniae).